A 409-amino-acid chain; its full sequence is Thiaminase-1 (409 aa).

The signal sequence occupies residues 1–29 (MSKVKGFIYKPLMVMLALLLVVVSPAGAG). The active-site Nucleophile is cysteine 143. Glutamate 271 (proton acceptor) is an active-site residue.

As to quaternary structure, monomer.

Its subcellular location is the secreted. The enzyme catalyses pyridine + thiamine = heteropyrithiamine + 5-(2-hydroxyethyl)-4-methylthiazole. Its function is as follows. Degrades thiamine by replacing its thiazole moiety with a wide range of nucleophiles. The chain is Thiaminase-1 from Paenibacillus thiaminolyticus (Bacillus thiaminolyticus).